Consider the following 181-residue polypeptide: Adenylate kinase (181 aa).

10–15 (GAGKGT) contacts ATP. Residues 30–59 (STGELFRKNIQDGTKLGIEAKRYLDAGDLV) form an NMP region. Residues T31, R36, 57-59 (DLV), 85-88 (GYPR), and Q92 contribute to the AMP site. The tract at residues 126 to 132 (GRGRADD) is LID. Position 127 (R127) interacts with ATP. Positions 129 and 140 each coordinate AMP. ATP is bound at residue G166.

The protein belongs to the adenylate kinase family. In terms of assembly, monomer.

It is found in the cytoplasm. The catalysed reaction is AMP + ATP = 2 ADP. Its pathway is purine metabolism; AMP biosynthesis via salvage pathway; AMP from ADP: step 1/1. In terms of biological role, catalyzes the reversible transfer of the terminal phosphate group between ATP and AMP. Plays an important role in cellular energy homeostasis and in adenine nucleotide metabolism. In Mycobacterium marinum (strain ATCC BAA-535 / M), this protein is Adenylate kinase.